We begin with the raw amino-acid sequence, 328 residues long: D-cysteine desulfhydrase (328 aa).

Lys51 is modified (N6-(pyridoxal phosphate)lysine).

It belongs to the ACC deaminase/D-cysteine desulfhydrase family. Homodimer. Requires pyridoxal 5'-phosphate as cofactor.

The enzyme catalyses D-cysteine + H2O = hydrogen sulfide + pyruvate + NH4(+) + H(+). Its function is as follows. Catalyzes the alpha,beta-elimination reaction of D-cysteine and of several D-cysteine derivatives. It could be a defense mechanism against D-cysteine. This is D-cysteine desulfhydrase from Klebsiella pneumoniae (strain 342).